The following is a 426-amino-acid chain: Protein arginine N-methyltransferase 2 (426 aa).

2 disordered regions span residues 65-88 and 155-175; these read DEEE…GQES and DEEM…AVAA. Residues 73 to 88 are compositionally biased toward polar residues; the sequence is NGVQTNGDRQTHGQES. The segment covering 155–168 has biased composition (acidic residues); that stretch reads DEEMEEDGEQEQEQ. Positions 207–426 constitute an RMT2 domain; it reads PSVTSSRYLN…YRLPLCKYMD (220 aa). S-adenosyl-L-methionine-binding positions include Tyr-214, Met-243, 263–268, 284–286, 311–312, and Asp-331; these read HGMGIV, EAH, and WQ.

Belongs to the class I-like SAM-binding methyltransferase superfamily. RMT2 methyltransferase family. As to quaternary structure, monomer.

Its subcellular location is the cytoplasm. The protein localises to the nucleus. Its function is as follows. S-adenosyl-L-methionine-dependent protein-arginine N-methyltransferase that methylates the delta-nitrogen atom of arginine residues to form N5-methylarginine (type IV) in target proteins. Monomethylates ribosomal protein L12. The protein is Protein arginine N-methyltransferase 2 of Emericella nidulans (strain FGSC A4 / ATCC 38163 / CBS 112.46 / NRRL 194 / M139) (Aspergillus nidulans).